The chain runs to 369 residues: tRNA 2-selenouridine synthase (369 aa).

The 124-residue stretch at Phe15–Glu138 folds into the Rhodanese domain. The S-selanylcysteine intermediate role is filled by Cys98.

Belongs to the SelU family. As to quaternary structure, monomer.

It carries out the reaction 5-methylaminomethyl-2-thiouridine(34) in tRNA + selenophosphate + (2E)-geranyl diphosphate + H2O + H(+) = 5-methylaminomethyl-2-selenouridine(34) in tRNA + (2E)-thiogeraniol + phosphate + diphosphate. The enzyme catalyses 5-methylaminomethyl-2-thiouridine(34) in tRNA + (2E)-geranyl diphosphate = 5-methylaminomethyl-S-(2E)-geranyl-thiouridine(34) in tRNA + diphosphate. It catalyses the reaction 5-methylaminomethyl-S-(2E)-geranyl-thiouridine(34) in tRNA + selenophosphate + H(+) = 5-methylaminomethyl-2-(Se-phospho)selenouridine(34) in tRNA + (2E)-thiogeraniol. The catalysed reaction is 5-methylaminomethyl-2-(Se-phospho)selenouridine(34) in tRNA + H2O = 5-methylaminomethyl-2-selenouridine(34) in tRNA + phosphate. Involved in the post-transcriptional modification of the uridine at the wobble position (U34) of tRNA(Lys), tRNA(Glu) and tRNA(Gln). Catalyzes the conversion of 2-thiouridine (S2U-RNA) to 2-selenouridine (Se2U-RNA). Acts in a two-step process involving geranylation of 2-thiouridine (S2U) to S-geranyl-2-thiouridine (geS2U) and subsequent selenation of the latter derivative to 2-selenouridine (Se2U) in the tRNA chain. The polypeptide is tRNA 2-selenouridine synthase (Shewanella sp. (strain MR-7)).